Reading from the N-terminus, the 161-residue chain is ATP synthase subunit b' (161 aa).

Residues leucine 26–tyrosine 45 traverse the membrane as a helical segment.

The protein belongs to the ATPase B chain family. As to quaternary structure, F-type ATPases have 2 components, F(1) - the catalytic core - and F(0) - the membrane proton channel. F(1) has five subunits: alpha(3), beta(3), gamma(1), delta(1), epsilon(1). F(0) has four main subunits: a(1), b(1), b'(1) and c(10-14). The alpha and beta chains form an alternating ring which encloses part of the gamma chain. F(1) is attached to F(0) by a central stalk formed by the gamma and epsilon chains, while a peripheral stalk is formed by the delta, b and b' chains.

It localises to the cellular thylakoid membrane. In terms of biological role, f(1)F(0) ATP synthase produces ATP from ADP in the presence of a proton or sodium gradient. F-type ATPases consist of two structural domains, F(1) containing the extramembraneous catalytic core and F(0) containing the membrane proton channel, linked together by a central stalk and a peripheral stalk. During catalysis, ATP synthesis in the catalytic domain of F(1) is coupled via a rotary mechanism of the central stalk subunits to proton translocation. Its function is as follows. Component of the F(0) channel, it forms part of the peripheral stalk, linking F(1) to F(0). The b'-subunit is a diverged and duplicated form of b found in plants and photosynthetic bacteria. This chain is ATP synthase subunit b', found in Trichodesmium erythraeum (strain IMS101).